Consider the following 447-residue polypeptide: Probable glycine dehydrogenase (decarboxylating) subunit 1 (447 aa).

It belongs to the GcvP family. N-terminal subunit subfamily. The glycine cleavage system is composed of four proteins: P, T, L and H. In this organism, the P 'protein' is a heterodimer of two subunits.

The catalysed reaction is N(6)-[(R)-lipoyl]-L-lysyl-[glycine-cleavage complex H protein] + glycine + H(+) = N(6)-[(R)-S(8)-aminomethyldihydrolipoyl]-L-lysyl-[glycine-cleavage complex H protein] + CO2. The glycine cleavage system catalyzes the degradation of glycine. The P protein binds the alpha-amino group of glycine through its pyridoxal phosphate cofactor; CO(2) is released and the remaining methylamine moiety is then transferred to the lipoamide cofactor of the H protein. In Sulfolobus acidocaldarius (strain ATCC 33909 / DSM 639 / JCM 8929 / NBRC 15157 / NCIMB 11770), this protein is Probable glycine dehydrogenase (decarboxylating) subunit 1.